The primary structure comprises 147 residues: Small ribosomal subunit protein uS5 (147 aa).

In terms of domain architecture, S5 DRBM spans 9–72; it reads FEEVIVDIGR…DDAFKNIIHV (64 aa).

This sequence belongs to the universal ribosomal protein uS5 family. As to quaternary structure, part of the 30S ribosomal subunit. Contacts proteins S4 and S8.

With S4 and S12 plays an important role in translational accuracy. Functionally, located at the back of the 30S subunit body where it stabilizes the conformation of the head with respect to the body. This Campylobacter curvus (strain 525.92) protein is Small ribosomal subunit protein uS5.